The sequence spans 177 residues: B-phycoerythrin beta chain (177 aa).

Residues K28, N35, D39, C50, D54, C61, N72, 77-78 (RR), C82, R129, 147-148 (SQ), 154-158 (PQGDC), and C158 contribute to the (2R,3E)-phycoerythrobilin site. N4-methylasparagine is present on N72.

This sequence belongs to the phycobiliprotein family. As to quaternary structure, heterotetramer of 2 different alpha chains and 2 identical beta chains. The subunit composition could comprise any combination of 2 out of 4 different alpha units with an invariant beta unit. Contains three covalently linked phycoerythrobilin chromophores.

It localises to the plastid. The protein resides in the chloroplast thylakoid membrane. Light-harvesting photosynthetic tetrapyrrole chromophore-protein from the phycobiliprotein complex. In Rhodomonas sp. (strain CS 24) (Chroomonas sp. (strain CS24)), this protein is B-phycoerythrin beta chain (cpeB).